Consider the following 215-residue polypeptide: Large ribosomal subunit protein uL16 (215 aa).

Residues 1–22 are disordered; it reads MGRRPARCYRQPKGKPYPKSRY.

The protein belongs to the universal ribosomal protein uL16 family.

The polypeptide is Large ribosomal subunit protein uL16 (RPL10) (Tetrahymena thermophila (strain SB210)).